An 82-amino-acid chain; its full sequence is Sec-independent protein translocase protein TatA (82 aa).

Residues 1–21 (MGSFSIWHWLIVLLIVVMVFG) form a helical membrane-spanning segment. The disordered stretch occupies residues 46 to 82 (GASTDDSATTSAPAGQVTNNSAAADKTTIDVEAKHKS). Residues 49 to 67 (TDDSATTSAPAGQVTNNSA) are compositionally biased toward polar residues. Positions 72 to 82 (TTIDVEAKHKS) are enriched in basic and acidic residues.

This sequence belongs to the TatA/E family. The Tat system comprises two distinct complexes: a TatABC complex, containing multiple copies of TatA, TatB and TatC subunits, and a separate TatA complex, containing only TatA subunits. Substrates initially bind to the TatABC complex, which probably triggers association of the separate TatA complex to form the active translocon.

Its subcellular location is the cell inner membrane. Its function is as follows. Part of the twin-arginine translocation (Tat) system that transports large folded proteins containing a characteristic twin-arginine motif in their signal peptide across membranes. TatA could form the protein-conducting channel of the Tat system. This Acidovorax ebreus (strain TPSY) (Diaphorobacter sp. (strain TPSY)) protein is Sec-independent protein translocase protein TatA.